A 385-amino-acid polypeptide reads, in one-letter code: 4-hydroxy-3-methylbut-2-en-1-yl diphosphate synthase (flavodoxin) (385 aa).

[4Fe-4S] cluster-binding residues include Cys-280, Cys-283, Cys-315, and Glu-322.

Belongs to the IspG family. The cofactor is [4Fe-4S] cluster.

The catalysed reaction is (2E)-4-hydroxy-3-methylbut-2-enyl diphosphate + oxidized [flavodoxin] + H2O + 2 H(+) = 2-C-methyl-D-erythritol 2,4-cyclic diphosphate + reduced [flavodoxin]. It participates in isoprenoid biosynthesis; isopentenyl diphosphate biosynthesis via DXP pathway; isopentenyl diphosphate from 1-deoxy-D-xylulose 5-phosphate: step 5/6. Its function is as follows. Converts 2C-methyl-D-erythritol 2,4-cyclodiphosphate (ME-2,4cPP) into 1-hydroxy-2-methyl-2-(E)-butenyl 4-diphosphate. This Streptomyces griseus subsp. griseus (strain JCM 4626 / CBS 651.72 / NBRC 13350 / KCC S-0626 / ISP 5235) protein is 4-hydroxy-3-methylbut-2-en-1-yl diphosphate synthase (flavodoxin).